The sequence spans 352 residues: Protein-glutamate methylesterase/protein-glutamine glutaminase (352 aa).

One can recognise a Response regulatory domain in the interval 5-122 (RAIVIDDSAF…SLDIRNVEDE (118 aa)). D56 is modified (4-aspartylphosphate). In terms of domain architecture, CheB-type methylesterase spans 163-352 (RSIVSIGTST…IPSLIVKQLT (190 aa)). Catalysis depends on residues S171, H198, and D294.

It belongs to the CheB family. Phosphorylated by CheA. Phosphorylation of the N-terminal regulatory domain activates the methylesterase activity.

It is found in the cytoplasm. It catalyses the reaction [protein]-L-glutamate 5-O-methyl ester + H2O = L-glutamyl-[protein] + methanol + H(+). It carries out the reaction L-glutaminyl-[protein] + H2O = L-glutamyl-[protein] + NH4(+). Its function is as follows. Involved in chemotaxis. Part of a chemotaxis signal transduction system that modulates chemotaxis in response to various stimuli. Catalyzes the demethylation of specific methylglutamate residues introduced into the chemoreceptors (methyl-accepting chemotaxis proteins or MCP) by CheR. Also mediates the irreversible deamidation of specific glutamine residues to glutamic acid. In Oceanobacillus iheyensis (strain DSM 14371 / CIP 107618 / JCM 11309 / KCTC 3954 / HTE831), this protein is Protein-glutamate methylesterase/protein-glutamine glutaminase.